A 267-amino-acid polypeptide reads, in one-letter code: 5'-nucleotidase SurE (267 aa).

Positions 14, 15, 45, and 100 each coordinate a divalent metal cation.

It belongs to the SurE nucleotidase family. The cofactor is a divalent metal cation.

The protein localises to the cytoplasm. It catalyses the reaction a ribonucleoside 5'-phosphate + H2O = a ribonucleoside + phosphate. Functionally, nucleotidase that shows phosphatase activity on nucleoside 5'-monophosphates. The protein is 5'-nucleotidase SurE of Methanosarcina mazei (strain ATCC BAA-159 / DSM 3647 / Goe1 / Go1 / JCM 11833 / OCM 88) (Methanosarcina frisia).